The sequence spans 508 residues: Pancreatic alpha-amylase 2a5 (508 aa).

The first 15 residues, 1-15, serve as a signal peptide directing secretion; sequence MKFVLLLSLIGFCWA. The residue at position 16 (Q16) is a Pyrrolidone carboxylic acid. 3 disulfides stabilise this stretch: C43-C101, C85-C130, and C156-C172. Positions 115, 170, and 179 each coordinate Ca(2+). Residue R207 coordinates chloride. The active-site Nucleophile is D209. H213 lines the Ca(2+) pocket. The active-site Proton donor is the E245. Residues N310 and R349 each contribute to the chloride site. 2 cysteine pairs are disulfide-bonded: C390–C396 and C462–C474.

It belongs to the glycosyl hydrolase 13 family. As to quaternary structure, monomer. The cofactor is Ca(2+). It depends on chloride as a cofactor.

The protein resides in the secreted. It localises to the extracellular space. It carries out the reaction Endohydrolysis of (1-&gt;4)-alpha-D-glucosidic linkages in polysaccharides containing three or more (1-&gt;4)-alpha-linked D-glucose units.. This chain is Pancreatic alpha-amylase 2a5, found in Mus musculus (Mouse).